Here is a 151-residue protein sequence, read N- to C-terminus: Ribosome maturation factor RimP (151 aa).

This sequence belongs to the RimP family.

It is found in the cytoplasm. Required for maturation of 30S ribosomal subunits. The protein is Ribosome maturation factor RimP of Colwellia psychrerythraea (strain 34H / ATCC BAA-681) (Vibrio psychroerythus).